The sequence spans 93 residues: Large ribosomal subunit protein uL23cz/uL23cy (93 aa).

The protein belongs to the universal ribosomal protein uL23 family. In terms of assembly, part of the 50S ribosomal subunit.

Its subcellular location is the plastid. It localises to the chloroplast. Its function is as follows. Binds to 23S rRNA. In Atropa belladonna (Belladonna), this protein is Large ribosomal subunit protein uL23cz/uL23cy (rpl23-A).